A 109-amino-acid polypeptide reads, in one-letter code: Large ribosomal subunit protein uL22 (109 aa).

Belongs to the universal ribosomal protein uL22 family. As to quaternary structure, part of the 50S ribosomal subunit.

This protein binds specifically to 23S rRNA; its binding is stimulated by other ribosomal proteins, e.g. L4, L17, and L20. It is important during the early stages of 50S assembly. It makes multiple contacts with different domains of the 23S rRNA in the assembled 50S subunit and ribosome. Its function is as follows. The globular domain of the protein is located near the polypeptide exit tunnel on the outside of the subunit, while an extended beta-hairpin is found that lines the wall of the exit tunnel in the center of the 70S ribosome. In Leptothrix cholodnii (strain ATCC 51168 / LMG 8142 / SP-6) (Leptothrix discophora (strain SP-6)), this protein is Large ribosomal subunit protein uL22.